A 150-amino-acid polypeptide reads, in one-letter code: Histone H2B.2 (150 aa).

Residues 1-16 (MAPKAEKKPAAKKPAE) show a composition bias toward basic and acidic residues. Positions 1 to 57 (MAPKAEKKPAAKKPAEEEPAAEKAPAGKKPKAEKRVPAGKSAGKEGGEGKRGRKKGK) are disordered. 2 positions are modified to N6-acetyllysine: Lys-7 and Lys-34. A Glycyl lysine isopeptide (Lys-Gly) (interchain with G-Cter in ubiquitin) cross-link involves residue Lys-146.

Belongs to the histone H2B family. The nucleosome is a histone octamer containing two molecules each of H2A, H2B, H3 and H4 assembled in one H3-H4 heterotetramer and two H2A-H2B heterodimers. The octamer wraps approximately 147 bp of DNA. In terms of processing, can be acetylated to form H2BK6ac and H2BK33ac. Monoubiquitinated to form H2BK143ub1; may give a specific tag for epigenetic transcriptional activation.

The protein localises to the nucleus. Its subcellular location is the chromosome. Its function is as follows. Core component of nucleosome. Nucleosomes wrap and compact DNA into chromatin, limiting DNA accessibility to the cellular machineries which require DNA as a template. Histones thereby play a central role in transcription regulation, DNA repair, DNA replication and chromosomal stability. DNA accessibility is regulated via a complex set of post-translational modifications of histones, also called histone code, and nucleosome remodeling. The chain is Histone H2B.2 from Zea mays (Maize).